The chain runs to 466 residues: Ferrochelatase-1, chloroplastic/mitochondrial (466 aa).

Residues 1–11 show a composition bias toward polar residues; sequence MQATALSSGFN. Positions 1 to 23 are disordered; the sequence is MQATALSSGFNPLTKRKDHRFPR. The transit peptide at 1–35 directs the protein to the chloroplast and mitochondrion; that stretch reads MQATALSSGFNPLTKRKDHRFPRSCSQRNSLSLIQ.

It belongs to the ferrochelatase family. In terms of tissue distribution, expressed in roots, leaves, stems and flowers. Present in both leaves and roots.

The protein localises to the plastid. It is found in the chloroplast membrane. Its subcellular location is the chloroplast thylakoid membrane. It localises to the mitochondrion. The catalysed reaction is heme b + 2 H(+) = protoporphyrin IX + Fe(2+). Its pathway is porphyrin-containing compound metabolism; protoheme biosynthesis; protoheme from protoporphyrin-IX: step 1/1. Functionally, catalyzes the last step of heme biosynthesis by inserting ferrous iron into protoporphyrin IX to produce protoheme. Produces heme for photosynthetic cytochromes, but does not seem to be involved in stress responses. May be involved in wound-induced supply of heme to defensive hemoproteins outside plastids. Regulates the expression of photosynthesis-associated nuclear genes in undeveloped chloroplasts through production of heme. The chain is Ferrochelatase-1, chloroplastic/mitochondrial from Arabidopsis thaliana (Mouse-ear cress).